The primary structure comprises 617 residues: Probable Xaa-Pro aminopeptidase P (617 aa).

The Mn(2+) site is built by aspartate 414, aspartate 425, glutamate 523, and glutamate 537.

Belongs to the peptidase M24B family. The cofactor is Mn(2+).

It carries out the reaction Release of any N-terminal amino acid, including proline, that is linked to proline, even from a dipeptide or tripeptide.. Functionally, catalyzes the removal of a penultimate prolyl residue from the N-termini of peptides. The chain is Probable Xaa-Pro aminopeptidase P (AMPP) from Ajellomyces capsulatus (strain NAm1 / WU24) (Darling's disease fungus).